The sequence spans 664 residues: Delta-like protein C (664 aa).

The N-terminal stretch at M1 to S20 is a signal peptide. Over S21–L511 the chain is Extracellular. The DSL domain occupies V154–C198. Disulfide bonds link C156–C165, C169–C181, C189–C198, C203–C214, C207–C220, C222–C231, C234–C245, C240–C251, C253–C262, C269–C281, C275–C291, C293–C302, C309–C320, C314–C329, C331–C340, C347–C358, C352–C368, C370–C379, C386–C397, C391–C406, C408–C417, C424–C435, C429–C444, C446–C455, C462–C473, C467–C482, and C484–C493. Residue N173 is glycosylated (N-linked (GlcNAc...) asparagine). 3 EGF-like domains span residues T199–D232, E233–N263, and D265–E303. The 37-residue stretch at E305–E341 folds into the EGF-like 4; calcium-binding domain. 2 EGF-like domains span residues S343–E380 and K382–E418. The 37-residue stretch at N420–R456 folds into the EGF-like 7; calcium-binding domain. The region spanning R458–E494 is the EGF-like 8 domain. Residues I512–V532 traverse the membrane as a helical segment. The Cytoplasmic portion of the chain corresponds to L533–V664.

Post-translationally, ubiquitinated by mib, leading to its endocytosis and subsequent degradation. Strongly expressed in the early retina, where it precedes other delta proteins. Also expressed in cranial ganglia, in sensory epithelia including ear and lateral line and in scattered epidermal cells. In the mesoderm, expression is visible by 50% epiboly; it is expressed subsequently in the tail bud, in stripes in the presomitic mesoderm and in the posterior half of each somite. Also expressed in notochord, blood vessels and pronephros. In contrast to other delta proteins, it is not expressed in the majority of nascent primary neurons. In somites, it marks the posterior part of each formed somite, while deltaD (dld) marks the anterior part.

The protein resides in the membrane. Acts as a ligand for Notch receptors and is involved in somitogenesis. Can activate Notch receptors. Required in somite segmentation to keep the oscillations of neighboring presomitic mesoderm cells synchronized. The polypeptide is Delta-like protein C (dlc) (Danio rerio (Zebrafish)).